A 266-amino-acid chain; its full sequence is Glutamate racemase (266 aa).

Substrate is bound by residues 9 to 10 (DS) and 41 to 42 (YG). The active-site Proton donor/acceptor is the cysteine 72. Residue 73–74 (NT) participates in substrate binding. The active-site Proton donor/acceptor is the cysteine 184. 185-186 (TH) provides a ligand contact to substrate.

This sequence belongs to the aspartate/glutamate racemases family.

The catalysed reaction is L-glutamate = D-glutamate. It functions in the pathway cell wall biogenesis; peptidoglycan biosynthesis. Provides the (R)-glutamate required for cell wall biosynthesis. This Staphylococcus aureus (strain bovine RF122 / ET3-1) protein is Glutamate racemase.